Consider the following 434-residue polypeptide: ATP-dependent protease ATPase subunit HslU (434 aa).

ATP contacts are provided by residues isoleucine 18, 60 to 65 (GVGKTE), aspartate 247, glutamate 312, and arginine 384.

This sequence belongs to the ClpX chaperone family. HslU subfamily. As to quaternary structure, a double ring-shaped homohexamer of HslV is capped on each side by a ring-shaped HslU homohexamer. The assembly of the HslU/HslV complex is dependent on binding of ATP.

The protein resides in the cytoplasm. In terms of biological role, ATPase subunit of a proteasome-like degradation complex; this subunit has chaperone activity. The binding of ATP and its subsequent hydrolysis by HslU are essential for unfolding of protein substrates subsequently hydrolyzed by HslV. HslU recognizes the N-terminal part of its protein substrates and unfolds these before they are guided to HslV for hydrolysis. The sequence is that of ATP-dependent protease ATPase subunit HslU from Brucella abortus (strain S19).